Consider the following 182-residue polypeptide: MPLLNTITTPYAEAFLQVAESKKEVEKIIAQAKSILQLWDESSELREAMGSPVLEVESKKAALEKIFSGKVTPSFLNFMKLLAERQRIGFLNSVLERLLELYRAQRNIALATVTSATPLNEDQQAALLKNVQSVAGTNNLELNLKVDPDLIGGFVVRVGSKVIDASLSGQVRRMGLELAKVT.

Belongs to the ATPase delta chain family. F-type ATPases have 2 components, F(1) - the catalytic core - and F(0) - the membrane proton channel. F(1) has five subunits: alpha(3), beta(3), gamma(1), delta(1), epsilon(1). CF(0) has four main subunits: a(1), b(1), b'(1) and c(10-14). The alpha and beta chains form an alternating ring which encloses part of the gamma chain. F(1) is attached to F(0) by a central stalk formed by the gamma and epsilon chains, while a peripheral stalk is formed by the delta, b and b' chains.

Its subcellular location is the cellular thylakoid membrane. Its function is as follows. F(1)F(0) ATP synthase produces ATP from ADP in the presence of a proton or sodium gradient. F-type ATPases consist of two structural domains, F(1) containing the extramembraneous catalytic core and F(0) containing the membrane proton channel, linked together by a central stalk and a peripheral stalk. During catalysis, ATP synthesis in the catalytic domain of F(1) is coupled via a rotary mechanism of the central stalk subunits to proton translocation. In terms of biological role, this protein is part of the stalk that links CF(0) to CF(1). It either transmits conformational changes from CF(0) to CF(1) or is implicated in proton conduction. The sequence is that of ATP synthase subunit delta from Prochlorococcus marinus (strain MIT 9211).